We begin with the raw amino-acid sequence, 147 residues long: Ubiquitin-conjugating enzyme E2 5A (147 aa).

Positions 1-15 (MASKRIQKELKDLQK) are enriched in basic and acidic residues. A disordered region spans residues 1–24 (MASKRIQKELKDLQKDPPTSCSAG). The UBC core domain maps to 1 to 147 (MASKRIQKEL…ARTWTQRYAM (147 aa)). Catalysis depends on cysteine 85, which acts as the Glycyl thioester intermediate.

The protein belongs to the ubiquitin-conjugating enzyme family.

The enzyme catalyses S-ubiquitinyl-[E1 ubiquitin-activating enzyme]-L-cysteine + [E2 ubiquitin-conjugating enzyme]-L-cysteine = [E1 ubiquitin-activating enzyme]-L-cysteine + S-ubiquitinyl-[E2 ubiquitin-conjugating enzyme]-L-cysteine.. It participates in protein modification; protein ubiquitination. In terms of biological role, E2 conjugating enzyme that associates with the E3 ubiquitin-protein ligase EL5 to mediate ubiquitination of target proteins. This is Ubiquitin-conjugating enzyme E2 5A (UBC5A) from Oryza sativa subsp. japonica (Rice).